The following is a 156-amino-acid chain: Transcription antitermination protein NusB (156 aa).

It belongs to the NusB family.

Its function is as follows. Involved in transcription antitermination. Required for transcription of ribosomal RNA (rRNA) genes. Binds specifically to the boxA antiterminator sequence of the ribosomal RNA (rrn) operons. This is Transcription antitermination protein NusB from Bartonella quintana (strain Toulouse) (Rochalimaea quintana).